We begin with the raw amino-acid sequence, 732 residues long: Non-structural protein 4 (732 aa).

Polar residues-rich tracts occupy residues K13 to H23 and L31 to S56. Disordered stretches follow at residues K13 to A74 and L706 to E732. Acidic residues predominate over residues Q719–E732.

In Catharanthus roseus (Madagascar periwinkle), this protein is Non-structural protein 4.